A 368-amino-acid chain; its full sequence is Glutaminyl-peptide cyclotransferase (368 aa).

An N-terminal signal peptide occupies residues 1–23 (MARERRDSKAATFFCLAWALCLA). N-linked (GlcNAc...) asparagine glycans are attached at residues asparagine 53 and asparagine 65. Cysteine 143 and cysteine 169 are disulfide-bonded. A Zn(2+)-binding site is contributed by aspartate 164. Glutamate 207 functions as the Proton acceptor in the catalytic mechanism. Residue glutamate 208 coordinates Zn(2+). Residue aspartate 254 is the Proton acceptor of the active site. N-linked (GlcNAc...) asparagine glycosylation is present at asparagine 292. Position 336 (histidine 336) interacts with Zn(2+). Asparagine 352 carries N-linked (GlcNAc...) asparagine glycosylation.

Belongs to the glutaminyl-peptide cyclotransferase family. As to expression, expressed by the venom gland.

The protein resides in the secreted. It catalyses the reaction N-terminal L-glutaminyl-[peptide] = N-terminal 5-oxo-L-prolyl-[peptide] + NH4(+). In terms of biological role, responsible for the biosynthesis of pyroglutamyl peptides. Has a bias against acidic and tryptophan residues adjacent to the N-terminal glutaminyl residue and a lack of importance of chain length after the second residue. Also catalyzes N-terminal pyroglutamate formation. In Bothrops jararaca (Jararaca), this protein is Glutaminyl-peptide cyclotransferase (QPCT).